A 232-amino-acid polypeptide reads, in one-letter code: Large ribosomal subunit protein uL3 (232 aa).

It belongs to the universal ribosomal protein uL3 family. Part of the 50S ribosomal subunit. Forms a cluster with proteins L14 and L19.

One of the primary rRNA binding proteins, it binds directly near the 3'-end of the 23S rRNA, where it nucleates assembly of the 50S subunit. This is Large ribosomal subunit protein uL3 from Sorangium cellulosum (strain So ce56) (Polyangium cellulosum (strain So ce56)).